Consider the following 47-residue polypeptide: PhoP/PhoQ regulator MgrB (47 aa).

The helical transmembrane segment at 6–26 (WVVLVVVVLACLLLWAQVFNM) threads the bilayer.

This sequence belongs to the MgrB family. As to quaternary structure, may form homooligomers. Probably interacts with the periplasmic domain of PhoQ.

The protein localises to the cell inner membrane. PhoP-regulated transcription is redox-sensitive, being activated when the periplasm becomes more reducing. MgrB acts between DsbA/DsbB and PhoP/PhoQ in this pathway. Represses PhoP/PhoQ signaling, possibly by binding to the periplasmic domain of PhoQ, altering its activity and that of downstream effector PhoP. In Escherichia coli O157:H7, this protein is PhoP/PhoQ regulator MgrB.